The sequence spans 117 residues: Ribonuclease P protein component (117 aa).

This sequence belongs to the RnpA family. Consists of a catalytic RNA component (M1 or rnpB) and a protein subunit.

The enzyme catalyses Endonucleolytic cleavage of RNA, removing 5'-extranucleotides from tRNA precursor.. In terms of biological role, RNaseP catalyzes the removal of the 5'-leader sequence from pre-tRNA to produce the mature 5'-terminus. It can also cleave other RNA substrates such as 4.5S RNA. The protein component plays an auxiliary but essential role in vivo by binding to the 5'-leader sequence and broadening the substrate specificity of the ribozyme. This chain is Ribonuclease P protein component, found in Staphylococcus aureus (strain MW2).